Reading from the N-terminus, the 100-residue chain is Small ribosomal subunit protein uS14c (100 aa).

It belongs to the universal ribosomal protein uS14 family. As to quaternary structure, part of the 30S ribosomal subunit.

The protein resides in the plastid. The protein localises to the chloroplast. In terms of biological role, binds 16S rRNA, required for the assembly of 30S particles. The chain is Small ribosomal subunit protein uS14c from Cicer arietinum (Chickpea).